The primary structure comprises 69 residues: MRAIISVLLISAMVFSIIEAVPLEEGLQLFEAERVGCLPRNRFCNALSGPRCCSGLRCKELSIWASKCL.

Positions 1-20 (MRAIISVLLISAMVFSIIEA) are cleaved as a signal peptide. Residues 21 to 34 (VPLEEGLQLFEAER) constitute a propeptide that is removed on maturation. Cystine bridges form between Cys-37–Cys-53, Cys-44–Cys-58, and Cys-52–Cys-68.

The protein belongs to the neurotoxin 01 (U2-agtx) family. In terms of tissue distribution, expressed by the venom gland.

Its subcellular location is the secreted. Functionally, insect active toxin causing rapid but reversible paralysis in crickets. No activity shown in mammals. Does not show effect on mammalian voltage-gated calcium channels. This is U2-agatoxin-Ao1e from Agelena orientalis (Funnel-web spider).